The following is a 547-amino-acid chain: Varicidin biosynthesis cluster MFS-type transporer (547 aa).

The span at 1 to 17 (MTTSTSKNAISKSSQED) shows a compositional bias: polar residues. Positions 1-33 (MTTSTSKNAISKSSQEDLCSDTKDKGSSGGGNE) are disordered. The next 11 helical transmembrane spans lie at 47-67 (LVLL…VCIS), 156-176 (LAPS…SVFT), 183-203 (WCFW…FLFV), 224-244 (ALGT…LQWG), 252-272 (SWRV…WLYV), 296-316 (ILFT…VPIW), 330-350 (INFL…GTLV), 360-382 (GQWR…WRYN), 392-412 (AGTL…PFIA), 422-442 (ISLG…VFLA), and 503-523 (CFLV…GMEW).

Belongs to the major facilitator superfamily. TCR/Tet family.

Its subcellular location is the cell membrane. MFS-type transporer; part of the gene cluster that mediates the biosynthesis of varicidin A, an antifungal natural product containing a cis-octahydrodecalin core. This Talaromyces variabilis (Penicillium variabile) protein is Varicidin biosynthesis cluster MFS-type transporer.